Reading from the N-terminus, the 108-residue chain is Small ribosomal subunit protein uS10 (108 aa).

The protein belongs to the universal ribosomal protein uS10 family. As to quaternary structure, part of the 30S ribosomal subunit.

Its function is as follows. Involved in the binding of tRNA to the ribosomes. This Ehrlichia chaffeensis (strain ATCC CRL-10679 / Arkansas) protein is Small ribosomal subunit protein uS10.